Consider the following 88-residue polypeptide: MRMGRVHYPTYRIVAVDSRVKRDGKYIALIGHLNPALKENKCKIDEAVALEWLNKGAKPTDTVRSLFSQTGLWKKFVESKKKPVAKSK.

Belongs to the bacterial ribosomal protein bS16 family.

This chain is Small ribosomal subunit protein bS16, found in Mycoplasma pneumoniae (strain ATCC 29342 / M129 / Subtype 1) (Mycoplasmoides pneumoniae).